A 395-amino-acid polypeptide reads, in one-letter code: Acetate kinase (395 aa).

Residue N10 participates in Mg(2+) binding. ATP is bound at residue K17. Residue R87 participates in substrate binding. The Proton donor/acceptor role is filled by D144. ATP contacts are provided by residues 204 to 208 (HLGNG), 279 to 281 (DMR), and 327 to 331 (GIGEN). Residue E381 coordinates Mg(2+).

The protein belongs to the acetokinase family. As to quaternary structure, homodimer. The cofactor is Mg(2+). It depends on Mn(2+) as a cofactor.

The protein localises to the cytoplasm. It catalyses the reaction acetate + ATP = acetyl phosphate + ADP. The protein operates within metabolic intermediate biosynthesis; acetyl-CoA biosynthesis; acetyl-CoA from acetate: step 1/2. Catalyzes the formation of acetyl phosphate from acetate and ATP. Can also catalyze the reverse reaction. The chain is Acetate kinase from Stutzerimonas stutzeri (strain A1501) (Pseudomonas stutzeri).